The sequence spans 235 residues: Large ribosomal subunit protein uL4 (235 aa).

A disordered region spans residues 45-75 (RAGTASTKTRGEVSGGGRKPWPQKHTGRARH). The span at 65 to 75 (WPQKHTGRARH) shows a compositional bias: basic residues.

The protein belongs to the universal ribosomal protein uL4 family. Part of the 50S ribosomal subunit.

Its function is as follows. One of the primary rRNA binding proteins, this protein initially binds near the 5'-end of the 23S rRNA. It is important during the early stages of 50S assembly. It makes multiple contacts with different domains of the 23S rRNA in the assembled 50S subunit and ribosome. In terms of biological role, this protein only weakly controls expression of the E.coli S10 operon. It is incorporated into E.coli ribosomes, however it is not as firmly associated as the endogenous protein. Forms part of the polypeptide exit tunnel. This chain is Large ribosomal subunit protein uL4 (rplD), found in Thermotoga maritima (strain ATCC 43589 / DSM 3109 / JCM 10099 / NBRC 100826 / MSB8).